A 475-amino-acid chain; its full sequence is Eukaryotic translation initiation factor 3 subunit L (475 aa).

The 195-residue stretch at 257-451 (DAIRMFSHIL…DLDYAMQGDL (195 aa)) folds into the PCI domain.

The protein belongs to the eIF-3 subunit L family. As to quaternary structure, component of the eukaryotic translation initiation factor 3 (eIF-3) complex.

Its subcellular location is the cytoplasm. Functionally, component of the eukaryotic translation initiation factor 3 (eIF-3) complex, which is involved in protein synthesis of a specialized repertoire of mRNAs and, together with other initiation factors, stimulates binding of mRNA and methionyl-tRNAi to the 40S ribosome. The eIF-3 complex specifically targets and initiates translation of a subset of mRNAs involved in cell proliferation. The polypeptide is Eukaryotic translation initiation factor 3 subunit L (Botryotinia fuckeliana (strain B05.10) (Noble rot fungus)).